Here is a 537-residue protein sequence, read N- to C-terminus: Glucans biosynthesis protein D (537 aa).

A signal peptide (tat-type signal) is located at residues 1–30 (MLMYRRDFLKSVTAAWVAFGLPNPLGGAFA).

It belongs to the OpgD/OpgG family. Predicted to be exported by the Tat system. The position of the signal peptide cleavage has not been experimentally proven.

The protein localises to the periplasm. It participates in glycan metabolism; osmoregulated periplasmic glucan (OPG) biosynthesis. In terms of biological role, probably involved in the control of the structural glucose backbone of osmoregulated periplasmic glucans (OPGs). The protein is Glucans biosynthesis protein D of Xylella fastidiosa (strain M12).